Reading from the N-terminus, the 354-residue chain is Regulatory protein RapD (354 aa).

TPR repeat units lie at residues 64–105 (FENQ…VKTA), 107–126 (KHAVHHFKKAEQYLAAIHNT), 130–163 (ADLYYQTAGAYYLMKSPPLSVQYVKKALHIYLHQ), 171–204 (ITCKLLLAVNYIDQERYEKAEQLFKEIIKKTQQL), 211–244 (CHAYYNLGFLKATEKKDQEALLYFRKVLKNQEFE), and 321–353 (IEAWVDLEVLLEDITEYYKKKDDFEKAAFFIMR).

The protein belongs to the Rap family.

It is found in the cytoplasm. In Bacillus subtilis (strain 168), this protein is Regulatory protein RapD (rapD).